The sequence spans 608 residues: ATP-citrate synthase beta chain protein 1 (608 aa).

ATP-binding positions include 214 to 234 (ILRF…ELGG) and 265 to 291 (FKSE…KNQA). Position 231 (Glu-231) interacts with Mg(2+). Catalysis depends on His-273, which acts as the Tele-phosphohistidine intermediate. 292–302 (LQDAGATVPTS) lines the CoA pocket.

Belongs to the succinate/malate CoA ligase alpha subunit family. As to quaternary structure, heterooctamer of 4 alpha and 4 beta chains.

It is found in the cytoplasm. The protein localises to the cytosol. It carries out the reaction oxaloacetate + acetyl-CoA + ADP + phosphate = citrate + ATP + CoA. Its function is as follows. ATP citrate-lyase is the primary enzyme responsible for the synthesis of cytosolic acetyl-CoA, used for the elongation of fatty acids and biosynthesis of isoprenoids, flavonoids and malonated derivatives. May supply substrate to the cytosolic acetyl-CoA carboxylase, which generates the malonyl-CoA used for the synthesis of a multitude of compounds, including very long chain fatty acids and flavonoids. Required for normal growth and development and elongation of C18 fatty acids to C20 to C24 fatty acids in seeds. In contrast to all known animal ACL enzymes having a homomeric structure, plant ACLs are composed of alpha and beta chains. The sequence is that of ATP-citrate synthase beta chain protein 1 (ACLB-1) from Arabidopsis thaliana (Mouse-ear cress).